We begin with the raw amino-acid sequence, 698 residues long: Methionine synthase reductase (698 aa).

The 143-residue stretch at 5-147 (LLLYATQQGQ…VVEPWIAGLW (143 aa)) folds into the Flavodoxin-like domain. 93 to 124 (LLGLGDSEYTYFCNGGKIIDKRLQELGARHFY) is an FMN binding site. The hinge stretch occupies residues 166-247 (ALPVASPASS…ASLNIPGLPP (82 aa)). Phosphoserine is present on residues Ser-171 and Ser-189. Residues 271–533 (DPVFQVPISK…PRTTNSFHLP (263 aa)) form the FAD-binding FR-type domain. Lys-291 is a binding site for NADP(+). FAD-binding positions include 451–454 (RPYS) and 487–490 (GVCT). Residues 610–611 (SR), 624–626 (YVQ), and Asp-659 contribute to the NADP(+) site. An FAD-binding site is contributed by Trp-697.

In terms of assembly, forms a multiprotein complex with MMACHC, MMADHC and MTR. FAD is required as a cofactor. FMN serves as cofactor. As to expression, found in all tissues tested, particularly abundant in skeletal muscle.

The protein resides in the cytoplasm. It catalyses the reaction 2 methylcob(III)alamin-[methionine synthase] + 2 S-adenosyl-L-homocysteine + NADP(+) + H(+) = 2 cob(II)alamin-[methionine synthase] + 2 S-adenosyl-L-methionine + NADPH. The enzyme catalyses 2 cob(II)alamin + A + 2 H2O + 2 H(+) = 2 aquacob(III)alamin + AH2. Its function is as follows. Key enzyme in methionine and folate homeostasis responsible for the reactivation of methionine synthase (MTR/MS) activity by catalyzing the reductive methylation of MTR-bound cob(II)alamin. Cobalamin (vitamin B12) forms a complex with MTR to serve as an intermediary in methyl transfer reactions that cycles between MTR-bound methylcob(III)alamin and MTR bound-cob(I)alamin forms, and occasional oxidative escape of the cob(I)alamin intermediate during the catalytic cycle leads to the inactive cob(II)alamin species. The processing of cobalamin in the cytosol occurs in a multiprotein complex composed of at least MMACHC, MMADHC, MTRR and MTR which may contribute to shuttle safely and efficiently cobalamin towards MTR in order to produce methionine. Also necessary for the utilization of methyl groups from the folate cycle, thereby affecting transgenerational epigenetic inheritance. Also acts as a molecular chaperone for methionine synthase by stabilizing apoMTR and incorporating methylcob(III)alamin into apoMTR to form the holoenzyme. Also serves as an aquacob(III)alamin reductase by reducing aquacob(III)alamin to cob(II)alamin; this reduction leads to stimulation of the conversion of apoMTR and aquacob(III)alamin to MTR holoenzyme. The protein is Methionine synthase reductase of Homo sapiens (Human).